Reading from the N-terminus, the 337-residue chain is Hsp90 co-chaperone Cdc37-like 1 (337 aa).

The segment covering 1-11 (MEQPWPPPGPW) has biased composition (pro residues). The tract at residues 1 to 42 (MEQPWPPPGPWSLPRAEGEAEEENDLDVFPSSPRCPQLPGGS) is disordered. Positions 2-171 (EQPWPPPGPW…YEQKIRHFGM (170 aa)) are self-association. Phosphoserine occurs at positions 32 and 88. The stretch at 85–122 (NSESLDQEHAKAQIAVSELRQREEEWRQKEEALVQREK) forms a coiled coil. The tract at residues 147–277 (KDTEDEDKSE…SRVRLYSQSQ (131 aa)) is self-association and interaction with Hsp90. The interval 267 to 337 (KSRVRLYSQS…DDEPKMMDTV (71 aa)) is interaction with Hsp70. The required for interaction with STIP1 stretch occupies residues 278-337 (SFQPMTVQNHVPHSGVGSIGLLESLPQNPDYLQYSINTALCSLNSVVHKEDDEPKMMDTV).

Belongs to the CDC37 family. As to quaternary structure, self-associates. Forms complexes with Hsp70 and Hsp90. Interacts with CDC37, FKBP4, PPID and STIP1.

The protein localises to the cytoplasm. In terms of biological role, co-chaperone that binds to numerous proteins and promotes their interaction with Hsp70 and Hsp90. The chain is Hsp90 co-chaperone Cdc37-like 1 (CDC37L1) from Pongo abelii (Sumatran orangutan).